A 225-amino-acid chain; its full sequence is Pyrimidine 5'-nucleotidase YjjG (225 aa).

Aspartate 9 acts as the Nucleophile in catalysis.

Belongs to the HAD-like hydrolase superfamily. YjjG family. In terms of assembly, monomer, homodimer and possibly homotetramer in solution. It depends on Mn(2+) as a cofactor. The cofactor is Mg(2+). Requires Co(2+) as cofactor.

The protein localises to the cytoplasm. It carries out the reaction a ribonucleoside 5'-phosphate + H2O = a ribonucleoside + phosphate. The catalysed reaction is a 2'-deoxyribonucleoside 5'-phosphate + H2O = a 2'-deoxyribonucleoside + phosphate. It catalyses the reaction UMP + H2O = uridine + phosphate. The enzyme catalyses dUMP + H2O = 2'-deoxyuridine + phosphate. It carries out the reaction dTMP + H2O = thymidine + phosphate. Its activity is regulated as follows. In contrast to nucleotidases from other families, is not inhibited by ribo- and deoxyribonucleoside di- and triphosphates. Nucleotidase that shows high phosphatase activity toward non-canonical pyrimidine nucleotides and three canonical nucleoside 5'-monophosphates (UMP, dUMP, and dTMP), and very low activity against TDP, IMP, UDP, GMP, dGMP, AMP, dAMP, and 6-phosphogluconate. Appears to function as a house-cleaning nucleotidase in vivo, since the general nucleotidase activity of YjjG allows it to protect cells against non-canonical pyrimidine derivatives such as 5-fluoro-2'-deoxyuridine, 5-fluorouridine, 5-fluoroorotate, 5-fluorouracil, and 5-aza-2'-deoxycytidine, and prevents the incorporation of potentially mutagenic nucleotides into DNA. Its dUMP phosphatase activity that catalyzes the hydrolysis of dUMP to deoxyuridine is necessary for thymine utilization via the thymine salvage pathway. Is strictly specific to substrates with 5'-phosphates and shows no activity against nucleoside 2'- or 3'-monophosphates. The polypeptide is Pyrimidine 5'-nucleotidase YjjG (yjjG) (Escherichia coli (strain K12)).